Consider the following 172-residue polypeptide: Ribosome maturation factor RimM (172 aa).

The 73-residue stretch at 96–168 folds into the PRC barrel domain; sequence DGEFYYHEII…RVQVELMEGL (73 aa).

This sequence belongs to the RimM family. In terms of assembly, binds ribosomal protein uS19.

The protein localises to the cytoplasm. An accessory protein needed during the final step in the assembly of 30S ribosomal subunit, possibly for assembly of the head region. Essential for efficient processing of 16S rRNA. May be needed both before and after RbfA during the maturation of 16S rRNA. It has affinity for free ribosomal 30S subunits but not for 70S ribosomes. The sequence is that of Ribosome maturation factor RimM from Streptococcus agalactiae serotype Ia (strain ATCC 27591 / A909 / CDC SS700).